Consider the following 285-residue polypeptide: Acetyl-coenzyme A carboxylase carboxyl transferase subunit beta (285 aa).

A CoA carboxyltransferase N-terminal domain is found at 29–285; it reads IMTKCPKCKK…ILKIHQEVTK (257 aa). Residues Cys-33, Cys-36, Cys-52, and Cys-55 each contribute to the Zn(2+) site. Residues 33-55 form a C4-type zinc finger; that stretch reads CPKCKKIMYTKELAENLNVCFNC.

The protein belongs to the AccD/PCCB family. Acetyl-CoA carboxylase is a heterohexamer composed of biotin carboxyl carrier protein (AccB), biotin carboxylase (AccC) and two subunits each of ACCase subunit alpha (AccA) and ACCase subunit beta (AccD). Zn(2+) is required as a cofactor.

The protein localises to the cytoplasm. It carries out the reaction N(6)-carboxybiotinyl-L-lysyl-[protein] + acetyl-CoA = N(6)-biotinyl-L-lysyl-[protein] + malonyl-CoA. It functions in the pathway lipid metabolism; malonyl-CoA biosynthesis; malonyl-CoA from acetyl-CoA: step 1/1. In terms of biological role, component of the acetyl coenzyme A carboxylase (ACC) complex. Biotin carboxylase (BC) catalyzes the carboxylation of biotin on its carrier protein (BCCP) and then the CO(2) group is transferred by the transcarboxylase to acetyl-CoA to form malonyl-CoA. This is Acetyl-coenzyme A carboxylase carboxyl transferase subunit beta from Staphylococcus aureus (strain MSSA476).